The sequence spans 87 residues: RNA-binding protein Hfq (87 aa).

Residues 9-68 (DPFLNALRRERIPVSIYLVNGIKLQGQIESFDQFVILLKNTVNQMVYKHAISTVVPARPV) enclose the Sm domain. The interval 65 to 87 (ARPVSHHSGDRPQGDRPQEKSED) is disordered. Positions 71 to 87 (HSGDRPQGDRPQEKSED) are enriched in basic and acidic residues.

Belongs to the Hfq family. In terms of assembly, homohexamer.

Functionally, RNA chaperone that binds small regulatory RNA (sRNAs) and mRNAs to facilitate mRNA translational regulation in response to envelope stress, environmental stress and changes in metabolite concentrations. Also binds with high specificity to tRNAs. This is RNA-binding protein Hfq from Vibrio parahaemolyticus serotype O3:K6 (strain RIMD 2210633).